Here is a 362-residue protein sequence, read N- to C-terminus: Talin rod domain-containing protein 1 (362 aa).

The interval 1 to 26 (MASGSAGKPTGEAASPAPASAIGGAS) is disordered. Residue Ala2 is modified to N-acetylalanine. The segment covering 13-26 (AASPAPASAIGGAS) has biased composition (low complexity).

May homodimerize. Interacts with F-actin.

In terms of biological role, actin-binding protein which may have an oncogenic function and regulates cell proliferation, migration and invasion in cancer cells. The chain is Talin rod domain-containing protein 1 from Homo sapiens (Human).